The following is a 346-amino-acid chain: D-alanine--D-alanine ligase (346 aa).

The region spanning Lys-133–Lys-327 is the ATP-grasp domain. Leu-159–Tyr-211 provides a ligand contact to ATP. Asp-284, Glu-296, and Asn-298 together coordinate Mg(2+).

The protein belongs to the D-alanine--D-alanine ligase family. It depends on Mg(2+) as a cofactor. Mn(2+) serves as cofactor.

The protein resides in the cytoplasm. It catalyses the reaction 2 D-alanine + ATP = D-alanyl-D-alanine + ADP + phosphate + H(+). It functions in the pathway cell wall biogenesis; peptidoglycan biosynthesis. Functionally, cell wall formation. The chain is D-alanine--D-alanine ligase from Campylobacter jejuni subsp. jejuni serotype O:6 (strain 81116 / NCTC 11828).